A 162-amino-acid polypeptide reads, in one-letter code: Endoribonuclease YbeY (162 aa).

Residues His-117, His-121, and His-127 each contribute to the Zn(2+) site.

The protein belongs to the endoribonuclease YbeY family. Zn(2+) is required as a cofactor.

It localises to the cytoplasm. Single strand-specific metallo-endoribonuclease involved in late-stage 70S ribosome quality control and in maturation of the 3' terminus of the 16S rRNA. The polypeptide is Endoribonuclease YbeY (Francisella tularensis subsp. tularensis (strain WY96-3418)).